A 107-amino-acid polypeptide reads, in one-letter code: Flagellar transcriptional regulator FlhD (107 aa).

This sequence belongs to the FlhD family. As to quaternary structure, homodimer; disulfide-linked. Forms a heterohexamer composed of two FlhC and four FlhD subunits. Each FlhC binds a FlhD dimer, forming a heterotrimer, and a hexamer assembles by dimerization of two heterotrimers.

The protein resides in the cytoplasm. Its function is as follows. Functions in complex with FlhC as a master transcriptional regulator that regulates transcription of several flagellar and non-flagellar operons by binding to their promoter region. Activates expression of class 2 flagellar genes, including fliA, which is a flagellum-specific sigma factor that turns on the class 3 genes. Also regulates genes whose products function in a variety of physiological pathways. The polypeptide is Flagellar transcriptional regulator FlhD (Bordetella avium (strain 197N)).